A 699-amino-acid chain; its full sequence is Elongation factor G (699 aa).

One can recognise a tr-type G domain in the interval 8–283; it reads EHIRNIGICA…AVVDFLPSPI (276 aa). GTP is bound by residues 17-24, 81-85, and 135-138; these read AHIDAGKT, DTPGH, and NKMD.

Belongs to the TRAFAC class translation factor GTPase superfamily. Classic translation factor GTPase family. EF-G/EF-2 subfamily.

The protein localises to the cytoplasm. In terms of biological role, catalyzes the GTP-dependent ribosomal translocation step during translation elongation. During this step, the ribosome changes from the pre-translocational (PRE) to the post-translocational (POST) state as the newly formed A-site-bound peptidyl-tRNA and P-site-bound deacylated tRNA move to the P and E sites, respectively. Catalyzes the coordinated movement of the two tRNA molecules, the mRNA and conformational changes in the ribosome. This chain is Elongation factor G, found in Rickettsia sibirica (strain ATCC VR-151 / 246).